The following is a 190-amino-acid chain: 3-isopropylmalate dehydratase small subunit (190 aa).

This sequence belongs to the LeuD family. LeuD type 1 subfamily. As to quaternary structure, heterodimer of LeuC and LeuD.

It carries out the reaction (2R,3S)-3-isopropylmalate = (2S)-2-isopropylmalate. Its pathway is amino-acid biosynthesis; L-leucine biosynthesis; L-leucine from 3-methyl-2-oxobutanoate: step 2/4. In terms of biological role, catalyzes the isomerization between 2-isopropylmalate and 3-isopropylmalate, via the formation of 2-isopropylmaleate. The chain is 3-isopropylmalate dehydratase small subunit from Staphylococcus aureus (strain USA300).